The chain runs to 660 residues: MRLVRLLGMVLTILAAGLLLGPPAGAQPPFRLSNYVTDNAGVLTSSGRTAVTAAVDRLYADRRIRLWVVYVENFSGQSALNWAQRTTRTSELGNYDALLAVATTGREYAFLVPSAMPGVSEGQVDNVRRYQIEPALHDGDYSGAAVAAANGLNRSPSSSSRVVLLVTVGIIVIVVAVLLVVMRHRNRRRRADELAAARRVDPTNVMALAAVPLQALDDLSRSMVVDVDNAVRTSTNELALAIEEFGERRTAPFTQAVNNAKAALSQAFTVRQQLDDNTPETPAQRRELLTRVIVSAAHADRELASQTEAFEKLRDLVINAPARLDLLTQQYVELTTRIGPTQQRLAELHTEFDAAAMTSIAGNVTTATERLAFADRNISAARDLADQAVSGRQAGLVDAVRAAESALGQARALLDAVDSAATDIRHAVASLPAVVADIQTGIKRANQHLQQAQQPQTGRTGDLIAARDAAARALDRARGAADPLTAFDQLTKVDADLDRLLATLAEEQATADRLNRSLEQALFTAESRVRAVSEYIDTRRGSIGPEARTRLAEAKRQLEAAHDRKSSNPTEAIAYANAASTLAAHAQSLANADVQSAQRAYTRRGGNNAGAILGGIIIGDLLSGGTRGGLGGWIPTSFGGSSNAPGSSPDGGFLGGGGRF.

An N-terminal signal peptide occupies residues 1-26 (MRLVRLLGMVLTILAAGLLLGPPAGA). The chain crosses the membrane as a helical span at residues 162–182 (VVLLVTVGIIVIVVAVLLVVM). Positions 488–567 (DQLTKVDADL…LEAAHDRKSS (80 aa)) form a coiled coil. Residues 605-625 (GGNNAGAILGGIIIGDLLSGG) traverse the membrane as a helical segment. Residues 638-660 (FGGSSNAPGSSPDGGFLGGGGRF) form a disordered region.

This sequence belongs to the UPF0603 family.

It is found in the cell membrane. Its function is as follows. May play a role in septum formation. The sequence is that of UPF0603 protein MT2410 from Mycobacterium tuberculosis (strain CDC 1551 / Oshkosh).